The primary structure comprises 658 residues: Protein CFAP20DC (658 aa).

Disordered regions lie at residues 312–522 and 589–634; these read QQGE…EEEY and PVNQ…LDSS. Residues 319–328 show a composition bias toward polar residues; it reads SHPVKQTTPL. The segment covering 339 to 349 has biased composition (basic and acidic residues); sequence PPRDPSADKGS. 2 stretches are compositionally biased toward low complexity: residues 351–363 and 417–434; these read RRGL…SGSR and SSGP…LLLD. The segment covering 494–506 has biased composition (basic and acidic residues); the sequence is DPKEDSRVTKGDT. Residues 507–521 are compositionally biased toward acidic residues; it reads ELEDDFYGSDSSEEE. The segment covering 625–634 has biased composition (polar residues); the sequence is QPLEQSLDSS.

The chain is Protein CFAP20DC from Rattus norvegicus (Rat).